Here is a 543-residue protein sequence, read N- to C-terminus: Chaperonin GroEL (543 aa).

ATP is bound by residues 29 to 32, 86 to 90, Gly-413, 476 to 478, and Asp-492; these read TLGP, DGTTT, and NAA.

It belongs to the chaperonin (HSP60) family. As to quaternary structure, forms a cylinder of 14 subunits composed of two heptameric rings stacked back-to-back. Interacts with the co-chaperonin GroES.

The protein localises to the cytoplasm. The catalysed reaction is ATP + H2O + a folded polypeptide = ADP + phosphate + an unfolded polypeptide.. In terms of biological role, together with its co-chaperonin GroES, plays an essential role in assisting protein folding. The GroEL-GroES system forms a nano-cage that allows encapsulation of the non-native substrate proteins and provides a physical environment optimized to promote and accelerate protein folding. The polypeptide is Chaperonin GroEL (Brevibacillus choshinensis).